The following is a 479-amino-acid chain: Glutamate--tRNA ligase (479 aa).

The 'HIGH' region signature appears at 9 to 19 (PSPTGLFHIGT). Positions 248-252 (KLSKR) match the 'KMSKS' region motif. K251 is a binding site for ATP.

It belongs to the class-I aminoacyl-tRNA synthetase family. Glutamate--tRNA ligase type 1 subfamily. As to quaternary structure, monomer.

The protein resides in the cytoplasm. It catalyses the reaction tRNA(Glu) + L-glutamate + ATP = L-glutamyl-tRNA(Glu) + AMP + diphosphate. Functionally, catalyzes the attachment of glutamate to tRNA(Glu) in a two-step reaction: glutamate is first activated by ATP to form Glu-AMP and then transferred to the acceptor end of tRNA(Glu). The sequence is that of Glutamate--tRNA ligase from Prochlorococcus marinus (strain MIT 9215).